The chain runs to 85 residues: Large ribosomal subunit protein bL31B (85 aa).

Belongs to the bacterial ribosomal protein bL31 family. Type B subfamily. As to quaternary structure, part of the 50S ribosomal subunit.

This chain is Large ribosomal subunit protein bL31B, found in Serratia proteamaculans (strain 568).